Here is a 158-residue protein sequence, read N- to C-terminus: NADH-quinone oxidoreductase subunit B (158 aa).

[4Fe-4S] cluster-binding residues include Cys37, Cys38, Cys102, and Cys132.

It belongs to the complex I 20 kDa subunit family. In terms of assembly, NDH-1 is composed of 14 different subunits. Subunits NuoB, C, D, E, F, and G constitute the peripheral sector of the complex. [4Fe-4S] cluster is required as a cofactor.

The protein localises to the cell inner membrane. The catalysed reaction is a quinone + NADH + 5 H(+)(in) = a quinol + NAD(+) + 4 H(+)(out). NDH-1 shuttles electrons from NADH, via FMN and iron-sulfur (Fe-S) centers, to quinones in the respiratory chain. Couples the redox reaction to proton translocation (for every two electrons transferred, four hydrogen ions are translocated across the cytoplasmic membrane), and thus conserves the redox energy in a proton gradient. The polypeptide is NADH-quinone oxidoreductase subunit B (Bordetella parapertussis (strain 12822 / ATCC BAA-587 / NCTC 13253)).